The primary structure comprises 67 residues: Photosystem II reaction center protein H (67 aa).

The chain crosses the membrane as a helical span at residues 27-47; sequence GAVPVMAFIGVLLLVFLVILL.

The protein belongs to the PsbH family. As to quaternary structure, PSII is composed of 1 copy each of membrane proteins PsbA, PsbB, PsbC, PsbD, PsbE, PsbF, PsbH, PsbI, PsbJ, PsbK, PsbL, PsbM, PsbT, PsbX, PsbY, Psb30/Ycf12, peripheral proteins PsbO, CyanoQ (PsbQ), PsbU, PsbV and a large number of cofactors. It forms dimeric complexes.

It localises to the cellular thylakoid membrane. In terms of biological role, one of the components of the core complex of photosystem II (PSII), required for its stability and/or assembly. PSII is a light-driven water:plastoquinone oxidoreductase that uses light energy to abstract electrons from H(2)O, generating O(2) and a proton gradient subsequently used for ATP formation. It consists of a core antenna complex that captures photons, and an electron transfer chain that converts photonic excitation into a charge separation. This chain is Photosystem II reaction center protein H, found in Prochlorococcus marinus (strain MIT 9211).